Reading from the N-terminus, the 93-residue chain is Small ribosomal subunit protein uS19m (93 aa).

It belongs to the universal ribosomal protein uS19 family.

It localises to the mitochondrion. In Marchantia polymorpha (Common liverwort), this protein is Small ribosomal subunit protein uS19m (RPS19).